A 318-amino-acid polypeptide reads, in one-letter code: Aspartate carbamoyltransferase catalytic subunit (318 aa).

Arg56 and Thr57 together coordinate carbamoyl phosphate. Position 84 (Lys84) interacts with L-aspartate. Carbamoyl phosphate contacts are provided by Arg106, His143, and Gln146. L-aspartate-binding residues include Arg176 and Arg230. Positions 271 and 272 each coordinate carbamoyl phosphate.

The protein belongs to the aspartate/ornithine carbamoyltransferase superfamily. ATCase family. In terms of assembly, heterododecamer (2C3:3R2) of six catalytic PyrB chains organized as two trimers (C3), and six regulatory PyrI chains organized as three dimers (R2).

It carries out the reaction carbamoyl phosphate + L-aspartate = N-carbamoyl-L-aspartate + phosphate + H(+). It functions in the pathway pyrimidine metabolism; UMP biosynthesis via de novo pathway; (S)-dihydroorotate from bicarbonate: step 2/3. Functionally, catalyzes the condensation of carbamoyl phosphate and aspartate to form carbamoyl aspartate and inorganic phosphate, the committed step in the de novo pyrimidine nucleotide biosynthesis pathway. In Mycobacterium avium (strain 104), this protein is Aspartate carbamoyltransferase catalytic subunit.